The following is a 279-amino-acid chain: Putative Delta(7)-sterol-C5(6)-desaturase 2 (279 aa).

A run of 2 helical transmembrane segments spans residues 48–68 (LAGN…IYYL) and 127–147 (FLCF…IYWV). Residues 134–263 (ALYLVLVEFM…TIWMDWMFGS (130 aa)) enclose the Fatty acid hydroxylase domain. Residues 148–152 (HKELH) carry the Histidine box-1 motif. Residues 162 to 166 (HATHH) carry the Histidine box-2 motif. The chain crosses the membrane as a helical span at residues 194–214 (HVIALFIVPIHLITHLSLLFL). The short motif at 239–243 (HTIHH) is the Histidine box-3 element.

The protein belongs to the sterol desaturase family. Requires Fe cation as cofactor.

It localises to the endoplasmic reticulum membrane. The catalysed reaction is a Delta(7)-sterol + 2 Fe(II)-[cytochrome b5] + O2 + 2 H(+) = a Delta(5),Delta(7)-sterol + 2 Fe(III)-[cytochrome b5] + 2 H2O. The protein is Putative Delta(7)-sterol-C5(6)-desaturase 2 (HDF7) of Arabidopsis thaliana (Mouse-ear cress).